The sequence spans 691 residues: Elongation factor G (691 aa).

A tr-type G domain is found at 12–286 (KKLRNIGIMA…GVLEYLPSPL (275 aa)). GTP contacts are provided by residues 21-28 (AHIDAGKT), 85-89 (DTPGH), and 139-142 (NKMD).

This sequence belongs to the TRAFAC class translation factor GTPase superfamily. Classic translation factor GTPase family. EF-G/EF-2 subfamily.

It is found in the cytoplasm. Its function is as follows. Catalyzes the GTP-dependent ribosomal translocation step during translation elongation. During this step, the ribosome changes from the pre-translocational (PRE) to the post-translocational (POST) state as the newly formed A-site-bound peptidyl-tRNA and P-site-bound deacylated tRNA move to the P and E sites, respectively. Catalyzes the coordinated movement of the two tRNA molecules, the mRNA and conformational changes in the ribosome. This chain is Elongation factor G, found in Thermosipho melanesiensis (strain DSM 12029 / CIP 104789 / BI429).